Consider the following 84-residue polypeptide: Cell division topological specificity factor (84 aa).

Belongs to the MinE family.

In terms of biological role, prevents the cell division inhibition by proteins MinC and MinD at internal division sites while permitting inhibition at polar sites. This ensures cell division at the proper site by restricting the formation of a division septum at the midpoint of the long axis of the cell. This is Cell division topological specificity factor from Pseudomonas putida (strain W619).